The chain runs to 183 residues: Probable RNA 2'-phosphotransferase (183 aa).

Belongs to the KptA/TPT1 family.

Removes the 2'-phosphate from RNA via an intermediate in which the phosphate is ADP-ribosylated by NAD followed by a presumed transesterification to release the RNA and generate ADP-ribose 1''-2''-cyclic phosphate (APPR&gt;P). May function as an ADP-ribosylase. This is Probable RNA 2'-phosphotransferase from Pyrococcus furiosus (strain ATCC 43587 / DSM 3638 / JCM 8422 / Vc1).